Consider the following 417-residue polypeptide: Phosphoglycerate kinase 2 (417 aa).

Serine 2 carries the N-acetylserine modification. Residues serine 2 and serine 4 each carry the phosphoserine modification. Lysine 11 bears the N6-acetyllysine mark. The (2R)-3-phosphoglycerate site is built by valine 23, aspartate 24, phenylalanine 25, asparagine 26, glutamine 38, arginine 39, serine 62, histidine 63, glycine 65, and arginine 66. An N6-acetyllysine mark is found at lysine 75, lysine 86, and lysine 97. (2R)-3-phosphoglycerate-binding residues include leucine 122 and arginine 123. An N6-acetyllysine mark is found at lysine 131 and lysine 146. Histidine 170 and arginine 171 together coordinate (2R)-3-phosphoglycerate. The residue at position 196 (tyrosine 196) is a Phosphotyrosine. N6-acetyllysine is present on lysine 199. Glycine 214 is an ADP binding site. CDP is bound at residue glycine 214. AMP is bound by residues alanine 215 and lysine 216. Alanine 215 provides a ligand contact to ATP. A Mg(2+)-binding site is contributed by alanine 215. Mg(2+) contacts are provided by alanine 218 and aspartate 219. Residue aspartate 219 participates in CDP binding. Position 220 (lysine 220) interacts with AMP. Lysine 220 lines the ATP pocket. Glycine 238 contacts ADP. Glycine 238 is a binding site for CDP. Glycine 239 contacts AMP. Glycine 239 serves as a coordination point for ATP. Lysine 267 and lysine 291 each carry N6-acetyllysine. Alanine 313 provides a ligand contact to AMP. Alanine 313 contacts ATP. The CDP site is built by glycine 338 and phenylalanine 343. Phenylalanine 343 is an ADP binding site. Residue glutamate 344 participates in AMP binding. 3 residues coordinate ATP: glutamate 344, aspartate 375, and threonine 376. Residue aspartate 375 participates in Mg(2+) binding.

This sequence belongs to the phosphoglycerate kinase family. As to quaternary structure, monomer. Mg(2+) is required as a cofactor. As to expression, testis specific.

Its subcellular location is the cytoplasm. It catalyses the reaction (2R)-3-phosphoglycerate + ATP = (2R)-3-phospho-glyceroyl phosphate + ADP. It participates in carbohydrate degradation; glycolysis; pyruvate from D-glyceraldehyde 3-phosphate: step 2/5. Functionally, essential for sperm motility and male fertility but is not required for the completion of spermatogenesis. In Sus scrofa (Pig), this protein is Phosphoglycerate kinase 2.